Reading from the N-terminus, the 183-residue chain is Capsid protein (183 aa).

Residues 136 to 183 (NAPILSTLPETTVVRRRGRSPRRRTPSPRRRRSQSPRRRRSQSRESQC) are disordered. Residues 149 to 176 (VRRRGRSPRRRTPSPRRRRSQSPRRRRS) show a composition bias toward basic residues. Ser-155, Ser-162, and Ser-170 each carry phosphoserine; by host. A 1; half-length repeat occupies 155 to 161 (SPRRRTP). The 3 X 8 AA repeats of S-P-R-R-R-[PR]-S-Q stretch occupies residues 155–177 (SPRRRTPSPRRRRSQSPRRRRSQ). The short motif at 158–175 (RRTPSPRRRRSQSPRRRR) is the Bipartite nuclear localization signal element. A run of 2 repeats spans residues 162-169 (SPRRRRSQ) and 170-177 (SPRRRRSQ). The interval 177–183 (QSRESQC) is RNA binding.

The protein belongs to the orthohepadnavirus core antigen family. As to quaternary structure, homodimerizes, then multimerizes. Interacts with cytosol exposed regions of viral L glycoprotein present in the reticulum-to-Golgi compartment. Interacts with human FLNB. Phosphorylated form interacts with host importin alpha; this interaction depends on the exposure of the NLS, which itself depends upon genome maturation and/or phosphorylation of the capsid protein. Interacts with host NUP153. Phosphorylated by host SRPK1, SRPK2, and maybe protein kinase C or GAPDH. Phosphorylation is critical for pregenomic RNA packaging. Protein kinase C phosphorylation is stimulated by HBx protein and may play a role in transport of the viral genome to the nucleus at the late step during the viral replication cycle.

It is found in the virion. It localises to the host cytoplasm. In terms of biological role, self assembles to form an icosahedral capsid. Most capsids appear to be large particles with an icosahedral symmetry of T=4 and consist of 240 copies of capsid protein, though a fraction forms smaller T=3 particles consisting of 180 capsid proteins. Entering capsids are transported along microtubules to the nucleus. Phosphorylation of the capsid is thought to induce exposure of nuclear localization signal in the C-terminal portion of the capsid protein that allows binding to the nuclear pore complex via the importin (karyopherin-) alpha and beta. Capsids are imported in intact form through the nuclear pore into the nuclear basket, where it probably binds NUP153. Only capsids that contain the mature viral genome can release the viral DNA and capsid protein into the nucleoplasm. Immature capsids get stuck in the basket. Capsids encapsulate the pre-genomic RNA and the P protein. Pre-genomic RNA is reverse-transcribed into DNA while the capsid is still in the cytoplasm. The capsid can then either be directed to the nucleus, providing more genomes for transcription, or bud through the endoplasmic reticulum to provide new virions. This Hepatitis B virus genotype B2 (isolate Indonesia/pIDW420/1988) (HBV-B) protein is Capsid protein.